An 87-amino-acid polypeptide reads, in one-letter code: Large ribosomal subunit protein bL31B (87 aa).

This sequence belongs to the bacterial ribosomal protein bL31 family. Type B subfamily. Part of the 50S ribosomal subunit.

This Burkholderia multivorans (strain ATCC 17616 / 249) protein is Large ribosomal subunit protein bL31B.